The sequence spans 319 residues: MDGVIKSIFTFILILEFIIGNLGNSFIVLVNCIDWVKRRKISLVDQLLIALAISRISLVWSIFGSWCVSVVFPALFATEKLLRMLTNIWTVTNHFSVWLATILGTFYFLKIANFSNSIFLYLKWRVKKVVLVLLLVTLVLLFLNILLINIHINASINGYRGNMTCSSASCNFIRFSSAIALTSTVFILIPFTLSLATFLLLSFSLWKHRKKMQHTVKGYRDVSTKAHRGVMQTVITFLLLYAVFFLTFFVSIWISERLKENQIIILSEMMGLAYPSGHSCVLILGNKKLRQASLSVLWWLRYRFKDGELSGHKEFRESS.

Residues 1 to 7 (MDGVIKS) are Extracellular-facing. A helical transmembrane segment spans residues 8–28 (IFTFILILEFIIGNLGNSFIV). Residues 29–55 (LVNCIDWVKRRKISLVDQLLIALAISR) are Cytoplasmic-facing. Residues 56-76 (ISLVWSIFGSWCVSVVFPALF) form a helical membrane-spanning segment. Residues 77–87 (ATEKLLRMLTN) lie on the Extracellular side of the membrane. Residues T86 and W89 each coordinate cholesterol. A helical membrane pass occupies residues 88 to 108 (IWTVTNHFSVWLATILGTFYF). The Cytoplasmic portion of the chain corresponds to 109–129 (LKIANFSNSIFLYLKWRVKKV). A helical membrane pass occupies residues 130–150 (VLVLLLVTLVLLFLNILLINI). Residues 151-184 (HINASINGYRGNMTCSSASCNFIRFSSAIALTST) lie on the Extracellular side of the membrane. N153 and N162 each carry an N-linked (GlcNAc...) asparagine glycan. A180 contributes to the cholesterol binding site. The helical transmembrane segment at 185 to 205 (VFILIPFTLSLATFLLLSFSL) threads the bilayer. Residues 206–232 (WKHRKKMQHTVKGYRDVSTKAHRGVMQ) are Cytoplasmic-facing. The helical transmembrane segment at 233 to 253 (TVITFLLLYAVFFLTFFVSIW) threads the bilayer. Residues 254–261 (ISERLKEN) lie on the Extracellular side of the membrane. The chain crosses the membrane as a helical span at residues 262–282 (QIIILSEMMGLAYPSGHSCVL). Cholesterol is bound by residues I265 and E268. At 283–317 (ILGNKKLRQASLSVLWWLRYRFKDGELSGHKEFRE) the chain is on the cytoplasmic side.

Belongs to the G-protein coupled receptor T2R family. In terms of assembly, core component of the TAS2R14-GNAI1 complex, consisting of TAS2R14, GNAI1, GNB1 and GNG2; within the complex interacts with GNAI1. Core component of the TAS2R14-GNAT3 complex, consisting of TAS2R14, GNAT3, GNB1 and GNG2; within the complex interacts with GNAT3. Core component of the TAS2R14-GNAS2 complex, consisting of TAS2R14, GNAS2, GNB1 and GNG2; within the complex interacts with GNAS2.

The protein localises to the membrane. It carries out the reaction Ca(2+)(in) = Ca(2+)(out). The enzyme catalyses 3',5'-cyclic AMP(in) = 3',5'-cyclic AMP(out). With respect to regulation, basal activity is enhanced by binding to bitter tastants, such as flufenamic acid and aristolochic acid. Regulated by cholesterol in a concentration-dependent manner. Gustducin-linked G-protein coupled receptor that plays a role in the perception of bitterness. The activity of this receptor stimulates GNAT3, activating the gustducin G-protein pathway. Likely plays a role in sensing the chemical composition of the gastrointestinal content and other extra-oral tissues via the inhibitory G-protein pathways. This is Taste receptor type 2 member 14 (TAS2R14) from Papio hamadryas (Hamadryas baboon).